A 269-amino-acid polypeptide reads, in one-letter code: 3-methyl-2-oxobutanoate hydroxymethyltransferase (269 aa).

Aspartate 48 and aspartate 87 together coordinate Mg(2+). Residues 48-49 (DS), aspartate 87, and lysine 117 each bind 3-methyl-2-oxobutanoate. Glutamate 119 is a Mg(2+) binding site. Glutamate 186 (proton acceptor) is an active-site residue.

Belongs to the PanB family. In terms of assembly, homodecamer; pentamer of dimers. It depends on Mg(2+) as a cofactor.

The protein resides in the cytoplasm. The catalysed reaction is 3-methyl-2-oxobutanoate + (6R)-5,10-methylene-5,6,7,8-tetrahydrofolate + H2O = 2-dehydropantoate + (6S)-5,6,7,8-tetrahydrofolate. Its pathway is cofactor biosynthesis; (R)-pantothenate biosynthesis; (R)-pantoate from 3-methyl-2-oxobutanoate: step 1/2. Its function is as follows. Catalyzes the reversible reaction in which hydroxymethyl group from 5,10-methylenetetrahydrofolate is transferred onto alpha-ketoisovalerate to form ketopantoate. This Moorella thermoacetica (strain ATCC 39073 / JCM 9320) protein is 3-methyl-2-oxobutanoate hydroxymethyltransferase.